Here is a 237-residue protein sequence, read N- to C-terminus: Uridylate kinase (237 aa).

11–14 contributes to the ATP binding site; sequence KLSG. Glycine 52 provides a ligand contact to UMP. Positions 53 and 57 each coordinate ATP. Residues aspartate 72 and 134–141 each bind UMP; that span reads TGYSYFTT. Positions 162, 168, and 171 each coordinate ATP.

This sequence belongs to the UMP kinase family. In terms of assembly, homohexamer.

It is found in the cytoplasm. It catalyses the reaction UMP + ATP = UDP + ADP. Its pathway is pyrimidine metabolism; CTP biosynthesis via de novo pathway; UDP from UMP (UMPK route): step 1/1. Its activity is regulated as follows. Inhibited by UTP. In terms of biological role, catalyzes the reversible phosphorylation of UMP to UDP. This is Uridylate kinase from Mycoplasma capricolum subsp. capricolum (strain California kid / ATCC 27343 / NCTC 10154).